An 89-amino-acid polypeptide reads, in one-letter code: Small ribosomal subunit protein uS15 (89 aa).

Belongs to the universal ribosomal protein uS15 family. Part of the 30S ribosomal subunit. Forms a bridge to the 50S subunit in the 70S ribosome, contacting the 23S rRNA.

Its function is as follows. One of the primary rRNA binding proteins, it binds directly to 16S rRNA where it helps nucleate assembly of the platform of the 30S subunit by binding and bridging several RNA helices of the 16S rRNA. Forms an intersubunit bridge (bridge B4) with the 23S rRNA of the 50S subunit in the ribosome. The polypeptide is Small ribosomal subunit protein uS15 (Pseudomonas fluorescens (strain Pf0-1)).